The following is a 326-amino-acid chain: NDRG-like protein (326 aa).

This sequence belongs to the NDRG family.

In Dictyostelium discoideum (Social amoeba), this protein is NDRG-like protein.